The chain runs to 143 residues: Flagellar assembly factor FliW (143 aa).

It belongs to the FliW family. As to quaternary structure, interacts with flagellin in a 1:1 complex. Two molecules interact with each CsrA dimer; cannot interact with both flagellin and CsrA simultaneously. Has a higher affinity for CsrA than for flagellin. Interacts directly with flagellin (hag), forms a 3-way complex of Hag, FliS and FliW in which Flis and FliW do not directly interact. Interaction with Hag may occur via the C-terminus of Hag.

Its subcellular location is the cytoplasm. In terms of biological role, acts as an anti-CsrA protein, binds CsrA and prevents it from repressing translation of its target genes, one of which is flagellin. Binds to flagellin (hag), which is implicated in polymerization, and participates in the assembly of the flagellum. An antagonist to translational regulator CsrA, it binds CsrA at an allosteric site and non-competitively inhibits CsrA binding to hag RNA. Partner switching by flagellin between FliW and CsrA provides a flagellar assembly checkpoint to tightly control the timing of flagellin synthesis. Flagellin binds to assembly factor FliW, freeing translation regulator CsrA to repress translation of the flagellin mRNA. When the flagellar hook is assembled flagellin is secreted, depleting intracellular flagellin, which frees FliW to interact with CsrA and inhibits CsrA binding to mRNA. This derepresses flagellin translation and provides protein for flagellar assembly. Once the flagellar filament is completed cytoplasmic flagellin levels rise and CsrA translation repression of flagellin reinitiates. Binds to CsrA and displaces it from hag mRNA. Binds to hag mRNA itself, but only at much higher concentrations than those required to displace CsrA. The sequence is that of Flagellar assembly factor FliW from Bacillus subtilis (strain 168).